The following is a 611-amino-acid chain: Beta-hexosaminidase (611 aa).

This sequence belongs to the glycosyl hydrolase 20 family. As to quaternary structure, homodimer.

The protein resides in the periplasm. The catalysed reaction is Hydrolysis of terminal non-reducing N-acetyl-D-hexosamine residues in N-acetyl-beta-D-hexosaminides.. It participates in glycan degradation; chitin degradation. Inhibited by mercuric ions, PNP-beta-Glc, PNP-beta-Gal, PNP-alpha-GlcNAc, and PNP-beta-S-GlcNAc. In terms of biological role, hydrolyzes aryl-N-acetyl-beta-D-glucosaminide (aryl-beta-GlcNAc), aryl-beta-GalNAc and chitin oligosaccharides. Can hydrolyze rapidly the artificial substrates p-nitrophenyl-N-acetyl-beta-D-glucosaminide (PNP-beta-GlcNAc) and 4-methylumbelliferyl-beta-GlcNAc, and is slightly active on p-nitrophenyl-beta-GalNAc. This enzyme is not processive, i.e. when it hydrolyzes (GlcNAc)n, both products, (Glc-NAc)n-1 and the terminal GlcNAc, are released before the enzyme attacks a second molecule of (GlcNAc)n or (GlcNAc)n-1. The sequence is that of Beta-hexosaminidase from Vibrio furnissii.